Here is a 571-residue protein sequence, read N- to C-terminus: Optineurin (571 aa).

Disordered regions lie at residues 1–32 and 100–144; these read MSHQ…HPNL and LSHE…DQLR. Residues 38–170 are a coiled coil; it reads EELLQQMKEL…VSELQLKLNS (133 aa). The segment at 58-209 is interaction with Rab8; it reads MKLNNQAMKG…GPTRTVSIGT (152 aa). A compositionally biased stretch (basic and acidic residues) spans 100 to 143; that stretch reads LSHENEKLKEELGKLKGKSERSSEDPTDDSRLPRAEAEQEKDQL. The LIR motif lies at 176-181; that stretch reads DSFVEI. S177 is modified (phosphoserine; by TBK1). Residues 186–197 are compositionally biased toward basic and acidic residues; it reads GEAEGSVKEIKH. Disordered regions lie at residues 186–210 and 255–291; these read GEAE…IGTS and VSDF…TVGS. Position 198 is a phosphoserine (S198). A compositionally biased stretch (polar residues) spans 201–210; that stretch reads PTRTVSIGTS. Positions 233 to 502 form a coiled coil; it reads CLREGNQKVE…LLKENDAFED (270 aa). 2 stretches are compositionally biased toward basic and acidic residues: residues 255-268 and 275-286; these read VSDF…RSEI and STEKENEEEKGP. S336 is modified (phosphoserine). Positions 405-571 are interaction with HD; that stretch reads TRKESEKVDR…LQIHVMDCII (167 aa). Positions 406–514 are interaction with MYO6; it reads RKESEKVDRA…RQSLMEMQSR (109 aa). The UBAN motif lies at 468–473; the sequence is DFHAER. The residue at position 520 (S520) is a Phosphoserine. The CCHC NOA-type zinc finger occupies 541-571; the sequence is QRNIPIHSCPKCGEVLPDIDTLQIHVMDCII. Zn(2+) contacts are provided by C549, C552, H565, and C569.

In terms of assembly, self-associates. Interacts with HD. Interacts with GTF3A. Interacts with MYO6. Interacts (via UBAN) with ubiquitinated TFRC. Interacts with GTP-bound Rab8 (RAB8A and/or RAB8B). Interacts with TBC1D17. Interacts with TBK1. Interacts with TRAF3. Binds to linear ubiquitin chains. Interacts with LC3 family members MAP1LC3A, MAP1LC3B, GABARAP, GABARAPL1 and GABARAPL2; OPTN phosphorylation increases the association (at least with MAP1LC3B). Interacts with RAB12; the interaction may be indirect. Interacts with TBK1; this interaction leads to the Golgi localization of TBK1 and its subsequent activation. Interacts with palmitoyltransferase ZDHHC17/HIP14; the interaction does not lead to palmitoylation of OPTN. Interacts with CYLD. Interacts with TOM1; the interaction is indirect and is mediated by MYO6, which acts as a bridge between TOM1 and OPTN. Interacts with USP12; the interaction is independent of USP12 deubiquitinase activity and may be involved in regulation of autophagic flux. Post-translationally, phosphorylated by TBK1, leading to restrict bacterial proliferation in case of infection. As to expression, present in aqueous humor of the eye (at protein level).

The protein localises to the cytoplasm. The protein resides in the perinuclear region. It localises to the golgi apparatus. It is found in the trans-Golgi network. Its subcellular location is the cytoplasmic vesicle. The protein localises to the autophagosome. The protein resides in the recycling endosome. Functionally, plays an important role in the maintenance of the Golgi complex, in membrane trafficking, in exocytosis, through its interaction with myosin VI and Rab8. Links myosin VI to the Golgi complex and plays an important role in Golgi ribbon formation. Negatively regulates the induction of IFNB in response to RNA virus infection. Plays a neuroprotective role in the eye and optic nerve. Probably part of the TNF-alpha signaling pathway that can shift the equilibrium toward induction of cell death. May act by regulating membrane trafficking and cellular morphogenesis via a complex that contains Rab8 and huntingtin (HD). Mediates the interaction of Rab8 with the probable GTPase-activating protein TBC1D17 during Rab8-mediated endocytic trafficking, such as that of transferrin receptor (TFRC/TfR); regulates Rab8 recruitment to tubules emanating from the endocytic recycling compartment. Autophagy receptor that interacts directly with both the cargo to become degraded and an autophagy modifier of the MAP1 LC3 family; targets ubiquitin-coated bacteria (xenophagy) and appears to function in the same pathway as SQSTM1 and CALCOCO2/NDP52. The chain is Optineurin (OPTN) from Macaca mulatta (Rhesus macaque).